The chain runs to 112 residues: UPF0102 protein Spea_0251 (112 aa).

The protein belongs to the UPF0102 family.

The polypeptide is UPF0102 protein Spea_0251 (Shewanella pealeana (strain ATCC 700345 / ANG-SQ1)).